The sequence spans 577 residues: Arginine--tRNA ligase (577 aa).

The 'HIGH' region motif lies at 123–133 (PNVAKEMHVGH).

Belongs to the class-I aminoacyl-tRNA synthetase family. In terms of assembly, monomer.

It localises to the cytoplasm. It catalyses the reaction tRNA(Arg) + L-arginine + ATP = L-arginyl-tRNA(Arg) + AMP + diphosphate. This chain is Arginine--tRNA ligase, found in Cronobacter sakazakii (strain ATCC BAA-894) (Enterobacter sakazakii).